We begin with the raw amino-acid sequence, 82 residues long: U16-lycotoxin-Ls1b (82 aa).

A signal peptide spans 1 to 22 (MSPKVQALLLLVGLITFLEVHA). A propeptide spanning residues 23-34 (EEELSETVESER) is cleaved from the precursor. Intrachain disulfides connect Cys36-Cys51, Cys43-Cys56, Cys50-Cys67, and Cys58-Cys65.

Belongs to the neurotoxin 02 (plectoxin) family. 04 (U16-lycotoxin) subfamily. As to expression, expressed by the venom gland.

It is found in the secreted. The protein is U16-lycotoxin-Ls1b of Lycosa singoriensis (Wolf spider).